The primary structure comprises 751 residues: Photosystem I P700 chlorophyll a apoprotein A1 (751 aa).

Transmembrane regions (helical) follow at residues 73–96, 159–182, 198–222, 294–312, 349–372, 388–414, 435–457, and 532–550; these read IFSA…FHGA, LYCT…FHYH, MNHH…HLSL, TAHH…GHMY, WHAQ…HHMY, LSLF…IFMV, AIVS…LYIH, and FLVH…LILV. Cysteine 574 and cysteine 583 together coordinate [4Fe-4S] cluster. 2 helical membrane passes run 590 to 611 and 665 to 687; these read HVFL…HFSW and LSAY…MFLF. A chlorophyll a'-binding site is contributed by histidine 676. The chlorophyll a site is built by methionine 684 and tyrosine 692. Tryptophan 693 contributes to the phylloquinone binding site. Residues 725 to 745 form a helical membrane-spanning segment; sequence AVGVAHYLLGGIGTTWAFFLA.

It belongs to the PsaA/PsaB family. As to quaternary structure, the PsaA/B heterodimer binds the P700 chlorophyll special pair and subsequent electron acceptors. PSI consists of a core antenna complex that captures photons, and an electron transfer chain that converts photonic excitation into a charge separation. The eukaryotic PSI reaction center is composed of at least 11 subunits. P700 is a chlorophyll a/chlorophyll a' dimer, A0 is one or more chlorophyll a, A1 is one or both phylloquinones and FX is a shared 4Fe-4S iron-sulfur center. is required as a cofactor.

The protein resides in the plastid. It is found in the chloroplast thylakoid membrane. The catalysed reaction is reduced [plastocyanin] + hnu + oxidized [2Fe-2S]-[ferredoxin] = oxidized [plastocyanin] + reduced [2Fe-2S]-[ferredoxin]. PsaA and PsaB bind P700, the primary electron donor of photosystem I (PSI), as well as the electron acceptors A0, A1 and FX. PSI is a plastocyanin/cytochrome c6-ferredoxin oxidoreductase, converting photonic excitation into a charge separation, which transfers an electron from the donor P700 chlorophyll pair to the spectroscopically characterized acceptors A0, A1, FX, FA and FB in turn. Oxidized P700 is reduced on the lumenal side of the thylakoid membrane by plastocyanin or cytochrome c6. In Pyropia yezoensis (Susabi-nori), this protein is Photosystem I P700 chlorophyll a apoprotein A1.